Reading from the N-terminus, the 1429-residue chain is Probable ATP-dependent RNA helicase spindle-E (1429 aa).

The Helicase ATP-binding domain occupies 121-288 (VNAINTHQVV…FSTKVSVPPV (168 aa)). An ATP-binding site is contributed by 134 to 141 (GETGCGKT). A DEAH box motif is present at residues 234–237 (DEVH). Residues 349–521 (QSEQSYDDAK…NSVLKAKLLD (173 aa)) enclose the Helicase C-terminal domain. The Tudor domain maps to 933-996 (AGVLTKGMMV…RLMTKELLSQ (64 aa)).

It belongs to the DEAD box helicase family. DEAH subfamily.

The protein resides in the cytoplasm. The catalysed reaction is ATP + H2O = ADP + phosphate + H(+). Probable ATP-binding RNA helicase which plays a central role during spermatogenesis and oogenesis by repressing transposable elements and preventing their mobilization, which is essential for the germline integrity. Acts via the piRNA metabolic process, which mediates the repression of transposable elements during meiosis by forming complexes composed of piRNAs and Piwi and govern the methylation and subsequent repression of transposons. Involved in the repression of LTR retrotransposon copia. Also involved in telomere regulation by repressing specialized telomeric retroelements HeT-A, TAHRE, and TART; Drosophila telomeres being maintained by transposition of specialized telomeric retroelements. Involved in telomeric trans-silencing, a repression mechanism by which a transposon or a transgene inserted in subtelomeric heterochromatin has the capacity to repress in trans in the female germline, a homologous transposon, or transgene located in euchromatin. Involved in the repression of testis-expressed Stellate genes by the homologous Su(Ste) repeats. Required for anteroposterior and dorsoventral axis formation during oogenesis. The sequence is that of Probable ATP-dependent RNA helicase spindle-E (spn-E) from Drosophila ananassae (Fruit fly).